A 183-amino-acid polypeptide reads, in one-letter code: Lipid droplet coating protein Cap20 (183 aa).

This sequence belongs to the perilipin family.

The protein resides in the lipid droplet. Lipid droplet coating protein that regulates lipid metabolism, appressorial turgor pressure, and virulence. Appressorial turgor pressure is important for the mechanical penetration of the host cuticle during infection. The protein is Lipid droplet coating protein Cap20 (Cap20) of Colletotrichum gloeosporioides (Anthracnose fungus).